Consider the following 224-residue polypeptide: MRLWKARVLKLVLKTAKDSRLGLNSKWLSLKLGDAGNPRSLAIRFILTNYNKLSIQSWFSLRRVEIISNNSIQAVFNPTGVYAPSGYSYRCQRVGSLQQDQALLLPSDTDDGSSLWEVTFIDFQIQGFAIKGGRFTKAQDCASSFSPAFLIGLAMSLILLLVLAYALHMLIYLRYLDQQYDLIASPAHFSQLKARDTAEEKELLRSQGAECYKLRSQQISKIYV.

A helical membrane pass occupies residues 147–167 (PAFLIGLAMSLILLLVLAYAL).

It belongs to the vacuolar ATPase subunit S1 family.

The protein resides in the membrane. The sequence is that of V-type proton ATPase subunit S1-like protein (ATP6AP1L) from Homo sapiens (Human).